The sequence spans 141 residues: Sperm-associated microtubule inner protein 10 (141 aa).

Positions Met1 to Asp16 are enriched in basic and acidic residues. The interval Met1–Gln33 is disordered.

As to quaternary structure, microtubule inner protein component of sperm flagellar doublet microtubules. In terms of tissue distribution, expressed predominantly in the testis.

It is found in the cytoplasm. The protein resides in the cytoskeleton. The protein localises to the flagellum axoneme. Functionally, microtubule inner protein (MIP) part of the dynein-decorated doublet microtubules (DMTs) in flagellum axoneme, which is required for flagellum beating. May serve to reinforce and thus stabilize the microtubule structure in the sperm flagella. Involved in the regulation of sperm motility. The chain is Sperm-associated microtubule inner protein 10 (Spmip10) from Mus musculus (Mouse).